Consider the following 340-residue polypeptide: Heat-inducible transcription repressor HrcA (340 aa).

It belongs to the HrcA family.

In terms of biological role, negative regulator of class I heat shock genes (grpE-dnaK-dnaJ and groELS operons). Prevents heat-shock induction of these operons. The protein is Heat-inducible transcription repressor HrcA of Burkholderia thailandensis (strain ATCC 700388 / DSM 13276 / CCUG 48851 / CIP 106301 / E264).